Reading from the N-terminus, the 235-residue chain is Ribonuclease S-2 (235 aa).

The first 31 residues, 1-31, serve as a signal peptide directing secretion; that stretch reads MATVQKSQHSHFFLLVGCIVHLSNFCSTTTA. Q41 is an RNA binding site. The cysteines at positions 47 and 54 are disulfide-linked. H66 contributes to the RNA binding site. Catalysis depends on H66, which acts as the Proton donor. N-linked (GlcNAc...) asparagine glycosylation is present at N72. Disulfide bonds link C80–C129, C189–C217, and C200–C211. Residues 105–106, R108, and F118 each bind RNA; that span reads DL. Q122 is an active-site residue. RNA is bound at residue 125–126; the sequence is KH. The Proton acceptor role is filled by H126.

The protein belongs to the RNase T2 family.

It localises to the secreted. It is found in the extracellular space. It carries out the reaction a ribonucleotidyl-ribonucleotide-RNA + H2O = a 3'-end 3'-phospho-ribonucleotide-RNA + a 5'-end dephospho-ribonucleoside-RNA + H(+). Self-incompatibility (SI) is the inherited ability of a flowering plant to prevent self-fertilization by discriminating between self and non-self pollen during pollination. In many species, self-incompatibility is controlled by the single, multiallelic locus S. The polypeptide is Ribonuclease S-2 (S2) (Antirrhinum hispanicum (Snapdragon)).